We begin with the raw amino-acid sequence, 540 residues long: MLO protein homolog 1 (540 aa).

At 1–16 (MAGGRSGSRELPETPT) the chain is on the extracellular side. A helical membrane pass occupies residues 17-37 (WAVAVVCAVLVLVSVAMEHGL). Topologically, residues 38 to 60 (HNLSHWFRRRQKKAMGDALDKIK) are cytoplasmic. A helical transmembrane segment spans residues 61–81 (AELMLLGFISLLLTVAQAPIS). At 82–142 (KICIPKSAAN…MSAKSMHQLH (61 aa)) the chain is on the extracellular side. The helical transmembrane segment at 143 to 163 (IFIFVLAVFHVTYCVITMGLG) threads the bilayer. Topologically, residues 164–265 (RLKMKKWKKW…IKRSLEDDFK (102 aa)) are cytoplasmic. A helical transmembrane segment spans residues 266 to 286 (VVVGISLPLWFVGILVLFLDI). A topological domain (extracellular) is located at residue His287. The chain crosses the membrane as a helical span at residues 288–308 (GLGTLIWISFVPLIIVLLVGT). Residues 309 to 347 (KLEMVIMQMAQEIQDRATVIQGAPVVEPSNKYFWFNRPD) lie on the Cytoplasmic side of the membrane. The chain crosses the membrane as a helical span at residues 348–368 (WVLFFIHLTLFHNAFQMAHFV). Residues 369 to 383 (WTMATPGLKKCFHEN) are Extracellular-facing. A helical membrane pass occupies residues 384-404 (IWLSIVEVIVGISLQVLCSYI). Over 405-540 (TFPLYALVTQ…DSDFSFSAQR (136 aa)) the chain is Cytoplasmic. The calmodulin-binding stretch occupies residues 426 to 447 (EQTMKALMNWRKKAMEKKKVRD). Positions 468–526 (ASPVHLLQDHRARSDDPPSPITVASPPAPEEDIYPVPAAAASRQLLDDPPDRRWMASSS) are disordered. 2 stretches are compositionally biased toward basic and acidic residues: residues 474-483 (LQDHRARSDD) and 512-521 (LLDDPPDRRW).

It belongs to the MLO family.

Its subcellular location is the membrane. Its function is as follows. May be involved in modulation of pathogen defense and leaf cell death. Activity seems to be regulated by Ca(2+)-dependent calmodulin binding and seems not to require heterotrimeric G proteins. This Oryza sativa subsp. japonica (Rice) protein is MLO protein homolog 1 (MLO1).